The sequence spans 309 residues: MFSPADNIFIILITGEFILGILGNGYIALVNWIDWIKKKKISTVDYILTNLVIARICLISVMVVNGIVIVLNPDVYTKNKQQIVIFTFWTFANYLNMWITTCLNVFYFLKIASSSHPLFLWLKWKIDMVVHWILLGCFAISLLVSLIAAIVLSCDYRFHAIAKHKRNITEMFXVSKIPYFEPLTLFNLFAIVPFIVSLISFFLLVRSLWRHTKQIKLYATGSRDPSTEVHVRAIKTMTSFIFFFFLYFISSILMTFSYLMTKYKLAVEFGEIAAILYPLGHSLILIVLNNKLRQIFVRMLTCRKIACVI.

Residues 1-7 are Extracellular-facing; that stretch reads MFSPADN. Residues 8 to 28 form a helical membrane-spanning segment; that stretch reads IFIILITGEFILGILGNGYIA. The Cytoplasmic portion of the chain corresponds to 29-50; sequence LVNWIDWIKKKKISTVDYILTN. The chain crosses the membrane as a helical span at residues 51–71; the sequence is LVIARICLISVMVVNGIVIVL. Over 72–82 the chain is Extracellular; sequence NPDVYTKNKQQ. The helical transmembrane segment at 83 to 103 threads the bilayer; sequence IVIFTFWTFANYLNMWITTCL. Residues 104 to 131 are Cytoplasmic-facing; sequence NVFYFLKIASSSHPLFLWLKWKIDMVVH. Residues 132-152 form a helical membrane-spanning segment; it reads WILLGCFAISLLVSLIAAIVL. Residues 153–184 are Extracellular-facing; that stretch reads SCDYRFHAIAKHKRNITEMFXVSKIPYFEPLT. A glycan (N-linked (GlcNAc...) asparagine) is linked at Asn-167. A helical transmembrane segment spans residues 185–205; sequence LFNLFAIVPFIVSLISFFLLV. The Cytoplasmic portion of the chain corresponds to 206-239; sequence RSLWRHTKQIKLYATGSRDPSTEVHVRAIKTMTS. Residues 240-260 form a helical membrane-spanning segment; the sequence is FIFFFFLYFISSILMTFSYLM. Residues 261-266 lie on the Extracellular side of the membrane; the sequence is TKYKLA. The helical transmembrane segment at 267–287 threads the bilayer; the sequence is VEFGEIAAILYPLGHSLILIV. Topologically, residues 288 to 309 are cytoplasmic; the sequence is LNNKLRQIFVRMLTCRKIACVI.

It belongs to the G-protein coupled receptor T2R family.

It is found in the membrane. Its function is as follows. Receptor that may play a role in the perception of bitterness and is gustducin-linked. May play a role in sensing the chemical composition of the gastrointestinal content. The activity of this receptor may stimulate alpha gustducin, mediate PLC-beta-2 activation and lead to the gating of TRPM5. This Pan troglodytes (Chimpanzee) protein is Taste receptor type 2 member 8 (TAS2R8).